Here is a 241-residue protein sequence, read N- to C-terminus: Small ribosomal subunit protein uS3 (241 aa).

One can recognise a KH type-2 domain in the interval 39 to 109; that stretch reads IRQHVEKNLS…QIRINVIEVS (71 aa). A disordered region spans residues 215-241; sequence EQAMAAPAPTPRKKRRPQQFEDRSNEE. A compositionally biased stretch (basic and acidic residues) spans 232–241; that stretch reads QQFEDRSNEE.

The protein belongs to the universal ribosomal protein uS3 family. Part of the 30S ribosomal subunit. Forms a tight complex with proteins S10 and S14.

In terms of biological role, binds the lower part of the 30S subunit head. Binds mRNA in the 70S ribosome, positioning it for translation. The protein is Small ribosomal subunit protein uS3 of Crocosphaera subtropica (strain ATCC 51142 / BH68) (Cyanothece sp. (strain ATCC 51142)).